The primary structure comprises 475 residues: Glucose-6-phosphate 1-dehydrogenase gcd1 (475 aa).

Positions 42 and 146 each coordinate NADP(+). D-glucose 6-phosphate is bound by residues Lys146, Glu214, and Asp233. The active-site Proton acceptor is the His238. Lys332 lines the D-glucose 6-phosphate pocket. NADP(+)-binding residues include Arg342 and Arg365.

Belongs to the glucose-6-phosphate dehydrogenase family.

Its subcellular location is the cytoplasm. It carries out the reaction D-glucose 6-phosphate + NADP(+) = 6-phospho-D-glucono-1,5-lactone + NADPH + H(+). The protein operates within carbohydrate degradation; pentose phosphate pathway; D-ribulose 5-phosphate from D-glucose 6-phosphate (oxidative stage): step 1/3. Catalyzes the rate-limiting step of the oxidative pentose-phosphate pathway, which represents a route for the dissimilation of carbohydrates besides glycolysis. The main function of this enzyme is to provide reducing power (NADPH) and pentose phosphates for fatty acid and nucleic acid synthesis. This is Glucose-6-phosphate 1-dehydrogenase gcd1 from Schizosaccharomyces pombe (strain 972 / ATCC 24843) (Fission yeast).